A 448-amino-acid polypeptide reads, in one-letter code: Trigger factor (448 aa).

In terms of domain architecture, PPIase FKBP-type spans 167–253 (GSIVRVDFVE…VKDIKRRDIP (87 aa)).

This sequence belongs to the FKBP-type PPIase family. Tig subfamily.

Its subcellular location is the cytoplasm. The catalysed reaction is [protein]-peptidylproline (omega=180) = [protein]-peptidylproline (omega=0). In terms of biological role, involved in protein export. Acts as a chaperone by maintaining the newly synthesized protein in an open conformation. Functions as a peptidyl-prolyl cis-trans isomerase. The sequence is that of Trigger factor from Borrelia recurrentis (strain A1).